A 305-amino-acid chain; its full sequence is Glycine--tRNA ligase alpha subunit (305 aa).

The protein belongs to the class-II aminoacyl-tRNA synthetase family. In terms of assembly, tetramer of two alpha and two beta subunits.

Its subcellular location is the cytoplasm. The enzyme catalyses tRNA(Gly) + glycine + ATP = glycyl-tRNA(Gly) + AMP + diphosphate. The polypeptide is Glycine--tRNA ligase alpha subunit (Heliobacterium modesticaldum (strain ATCC 51547 / Ice1)).